Here is an 81-residue protein sequence, read N- to C-terminus: U-poneritoxin(01)-Om2a (81 aa).

The N-terminal stretch at 1–25 (MKPSGITFAFLVVFMMAIMYNSVQA) is a signal peptide. The propeptide occupies 26-47 (AAIADADADAEAKAFADAFAEA).

It belongs to the formicidae venom precursor-01 superfamily. In terms of processing, truncated sequences of this peptide have also been found in the venom. It is possible they have been cleaved in the venom. Expressed by the venom gland.

The protein localises to the secreted. Cationic amphipathic alpha-helical peptide with antimicrobial activities against E.coli (MIC=6.2 uM), S.aureus (MIC=6.2 uM), and S.cerevisiae (MIC=50 uM). Also shows histamine-releasing activity (30.1% at 10 uM) and a weak hemolytic activity (10.4% at 50 uM). In Odontomachus monticola (Trap-jaw ant), this protein is U-poneritoxin(01)-Om2a.